A 216-amino-acid polypeptide reads, in one-letter code: Large ribosomal subunit protein uL3 (216 aa).

Residues 137–158 are disordered; sequence GASHGAHKNHRKPGSIGGASTP.

The protein belongs to the universal ribosomal protein uL3 family. In terms of assembly, part of the 50S ribosomal subunit. Forms a cluster with proteins L14 and L19.

Functionally, one of the primary rRNA binding proteins, it binds directly near the 3'-end of the 23S rRNA, where it nucleates assembly of the 50S subunit. The polypeptide is Large ribosomal subunit protein uL3 (Pseudarthrobacter chlorophenolicus (strain ATCC 700700 / DSM 12829 / CIP 107037 / JCM 12360 / KCTC 9906 / NCIMB 13794 / A6) (Arthrobacter chlorophenolicus)).